The chain runs to 327 residues: Biotin synthase (327 aa).

One can recognise a Radical SAM core domain in the interval 49–275; it reads RFGREVSLCS…VNPHAEVRMA (227 aa). Residues Cys-67, Cys-71, and Cys-74 each coordinate [4Fe-4S] cluster. Residues Ser-112, Cys-143, Cys-203, and Arg-273 each contribute to the [2Fe-2S] cluster site.

Belongs to the radical SAM superfamily. Biotin synthase family. In terms of assembly, homodimer. The cofactor is [4Fe-4S] cluster. [2Fe-2S] cluster serves as cofactor.

The enzyme catalyses (4R,5S)-dethiobiotin + (sulfur carrier)-SH + 2 reduced [2Fe-2S]-[ferredoxin] + 2 S-adenosyl-L-methionine = (sulfur carrier)-H + biotin + 2 5'-deoxyadenosine + 2 L-methionine + 2 oxidized [2Fe-2S]-[ferredoxin]. It functions in the pathway cofactor biosynthesis; biotin biosynthesis; biotin from 7,8-diaminononanoate: step 2/2. Its function is as follows. Catalyzes the conversion of dethiobiotin (DTB) to biotin by the insertion of a sulfur atom into dethiobiotin via a radical-based mechanism. The polypeptide is Biotin synthase (Maridesulfovibrio salexigens (strain ATCC 14822 / DSM 2638 / NCIMB 8403 / VKM B-1763) (Desulfovibrio salexigens)).